We begin with the raw amino-acid sequence, 130 residues long: Holin-like protein CidA (130 aa).

The next 4 membrane-spanning stretches (helical) occupy residues 6–26 (FVIK…IGTE), 31–51 (LHIP…LLQF), 65–85 (FLLK…MDVA), and 93–113 (ILFF…SGYI).

It belongs to the CidA/LrgA family. CidA subfamily.

It localises to the cell membrane. Increases the activity of extracellular murein hydrolases possibly by mediating their export via hole formation. Inhibited by the antiholin-like proteins LrgAB. In an unstressed cell, the LrgAB products probably inhibit the function of the CidAB proteins. When a cell is stressed by the addition of antibiotics or by other factors in the environment, the CidAB proteins possibly oligomerize within the bacterial cell membrane, creating lesions that disrupt the proton motive force, which in turn results in loss of cell viability. These lesions are also hypothesized to regulate the subsequent cell lysis by either allowing the murein hydrolases access to the cell wall substrate and/or regulating their activity by a possible change in the cell wall pH that results from loss of membrane potential. The chain is Holin-like protein CidA from Staphylococcus epidermidis (strain ATCC 35984 / DSM 28319 / BCRC 17069 / CCUG 31568 / BM 3577 / RP62A).